The chain runs to 689 residues: Elongation factor G (689 aa).

The tr-type G domain maps to Asp8–Leu282. Residues Ala17–Thr24, Asp81–His85, and Asn135–Asp138 contribute to the GTP site.

The protein belongs to the TRAFAC class translation factor GTPase superfamily. Classic translation factor GTPase family. EF-G/EF-2 subfamily.

The protein resides in the cytoplasm. Functionally, catalyzes the GTP-dependent ribosomal translocation step during translation elongation. During this step, the ribosome changes from the pre-translocational (PRE) to the post-translocational (POST) state as the newly formed A-site-bound peptidyl-tRNA and P-site-bound deacylated tRNA move to the P and E sites, respectively. Catalyzes the coordinated movement of the two tRNA molecules, the mRNA and conformational changes in the ribosome. This chain is Elongation factor G, found in Thermoanaerobacter pseudethanolicus (strain ATCC 33223 / 39E) (Clostridium thermohydrosulfuricum).